Here is a 732-residue protein sequence, read N- to C-terminus: Ubiquitin carboxyl-terminal hydrolase 21 (732 aa).

Residues 1–10 (MAEFSDPPPS) are compositionally biased toward pro residues. The tract at residues 1–111 (MAEFSDPPPS…ISPVSNNNHL (111 aa)) is disordered. 2 stretches are compositionally biased toward polar residues: residues 11-31 (NLSS…SSPT) and 38-53 (VTNS…QIQA). Residues 55–69 (SPAKPDGSSSSPPDK) show a composition bias toward low complexity. In terms of domain architecture, USP spans 163 to 469 (AGLYNSGNTC…PAYILFYARE (307 aa)). The active-site Nucleophile is the Cys-172. Residue His-428 is the Proton acceptor of the active site. A disordered region spans residues 534–732 (KEEVFHSAES…SSNMRRSIKL (199 aa)). Low complexity predominate over residues 540–551 (SAESSNNEDSSA). Over residues 583–609 (AYIDKSEKPFAETSQPKEPKPFADRAS) the composition is skewed to basic and acidic residues. Residues 719–732 (KKKKSSNMRRSIKL) show a composition bias toward basic residues.

The protein belongs to the peptidase C19 family.

It carries out the reaction Thiol-dependent hydrolysis of ester, thioester, amide, peptide and isopeptide bonds formed by the C-terminal Gly of ubiquitin (a 76-residue protein attached to proteins as an intracellular targeting signal).. Recognizes and hydrolyzes the peptide bond at the C-terminal Gly of ubiquitin. Involved in the processing of poly-ubiquitin precursors as well as that of ubiquitinated proteins. The protein is Ubiquitin carboxyl-terminal hydrolase 21 (UBP21) of Arabidopsis thaliana (Mouse-ear cress).